A 335-amino-acid polypeptide reads, in one-letter code: Methionine import ATP-binding protein MetN 1 (335 aa).

In terms of domain architecture, ABC transporter spans 2–242 (IEFHNVHKTY…PQHPTTRRFV (241 aa)). 38 to 45 (GHSGAGKS) lines the ATP pocket.

It belongs to the ABC transporter superfamily. Methionine importer (TC 3.A.1.24) family. As to quaternary structure, the complex is composed of two ATP-binding proteins (MetN), two transmembrane proteins (MetI) and a solute-binding protein (MetQ).

The protein localises to the cell inner membrane. It carries out the reaction L-methionine(out) + ATP + H2O = L-methionine(in) + ADP + phosphate + H(+). The catalysed reaction is D-methionine(out) + ATP + H2O = D-methionine(in) + ADP + phosphate + H(+). Functionally, part of the ABC transporter complex MetNIQ involved in methionine import. Responsible for energy coupling to the transport system. This Pseudomonas savastanoi pv. phaseolicola (strain 1448A / Race 6) (Pseudomonas syringae pv. phaseolicola (strain 1448A / Race 6)) protein is Methionine import ATP-binding protein MetN 1.